The chain runs to 613 residues: Autophagy-related protein 22-2 (613 aa).

A disordered region spans residues methionine 1 to threonine 30. Residues tyrosine 41–leucine 61 form a helical membrane-spanning segment. Asparagine 90 carries N-linked (GlcNAc...) asparagine glycosylation. A run of 7 helical transmembrane segments spans residues serine 120–phenylalanine 140, leucine 167–valine 187, cysteine 189–proline 209, valine 278–alanine 298, isoleucine 307–phenylalanine 327, valine 382–threonine 402, and valine 418–valine 438. An N-linked (GlcNAc...) asparagine glycan is attached at asparagine 448. The next 4 membrane-spanning stretches (helical) occupy residues leucine 453–phenylalanine 473, glycine 477–valine 497, phenylalanine 508–threonine 528, and glycine 553–alanine 573. The disordered stretch occupies residues arginine 592–isoleucine 613.

The protein belongs to the ATG22 family.

The protein resides in the vacuole membrane. Its function is as follows. Vacuolar effluxer which mediate the efflux of amino acids resulting from autophagic degradation. The release of autophagic amino acids allows the maintenance of protein synthesis and viability during nitrogen starvation. This chain is Autophagy-related protein 22-2 (atg22-2), found in Aspergillus fumigatus (strain ATCC MYA-4609 / CBS 101355 / FGSC A1100 / Af293) (Neosartorya fumigata).